Reading from the N-terminus, the 948-residue chain is Receptor-like protein 45 (948 aa).

An N-terminal signal peptide occupies residues 1–26 (MSSSKLMDFGLTWIIMMMILLQGCRS). Residues 27–897 (CIESERQGLL…EDDDESGLLD (871 aa)) lie on the Extracellular side of the membrane. Residues asparagine 99 and asparagine 113 are each glycosylated (N-linked (GlcNAc...) asparagine). LRR repeat units lie at residues 106–129 (FEEL…RKGG) and 135–162 (LRNL…AVSL). The LRR 3; degenerate repeat unit spans residues 163–183 (KTLILHDNLFKGGFPVQELIN). Asparagine 183 carries an N-linked (GlcNAc...) asparagine glycan. 25 LRR repeats span residues 184-208 (LTSL…ELTN), 210-233 (RNLR…GICR), 234-257 (LEQL…CFSR), 258-284 (FSKL…DFKS), 286-306 (EYLS…LITE), 307-332 (LTEL…VSGG), 334-357 (QSQL…LWYQ), 358-381 (QELR…LLEN), 382-404 (NTEL…PRTM), 405-429 (RRLQ…GLIL), 430-453 (ASLR…MARM), 454-477 (ENIE…LFTG), 479-502 (YSLS…SSDE), 503-526 (TSLI…LLNL), 527-549 (RMLS…WLGN), 550-573 (FFLE…LFNI), 575-595 (YLWL…LRSS), 596-618 (SDYG…DTLW), 619-640 (YGLR…LFRS), 642-665 (PSIS…LCGL), 666-689 (SNVR…VTNL), 758-782 (LNQM…LGDL), 783-805 (KRVR…SFSN), 807-831 (RSIE…TLLQ), and 833-855 (LVVF…QFNT). Asparagine 328 carries N-linked (GlcNAc...) asparagine glycosylation. Residues asparagine 381 and asparagine 392 are each glycosylated (N-linked (GlcNAc...) asparagine). Residues asparagine 436 and asparagine 465 are each glycosylated (N-linked (GlcNAc...) asparagine). An N-linked (GlcNAc...) asparagine glycan is attached at asparagine 608. Asparagine 653, asparagine 679, and asparagine 688 each carry an N-linked (GlcNAc...) asparagine glycan. A glycan (N-linked (GlcNAc...) asparagine) is linked at asparagine 789. N-linked (GlcNAc...) asparagine glycosylation is found at asparagine 837 and asparagine 842. The chain crosses the membrane as a helical span at residues 898-918 (IVVLWWSLGTTYVTVMMGFLV). At 919-948 (FLCFDSPWRRAWFCLVDTFIDRVKDVLGVI) the chain is on the cytoplasmic side.

Belongs to the RLP family.

It localises to the cell membrane. The chain is Receptor-like protein 45 from Arabidopsis thaliana (Mouse-ear cress).